A 401-amino-acid polypeptide reads, in one-letter code: uncharacterized protein (401 aa).

Positions 7, 13, 16, and 94 each coordinate [4Fe-4S] cluster. Glutamine 230, tyrosine 259, glutamate 280, and aspartate 328 together coordinate S-adenosyl-L-methionine. Cysteine 355 functions as the Nucleophile in the catalytic mechanism.

Belongs to the class I-like SAM-binding methyltransferase superfamily. RNA M5U methyltransferase family.

This is an uncharacterized protein from Chlamydia pneumoniae (Chlamydophila pneumoniae).